Consider the following 518-residue polypeptide: MFS-type transporter cnsO (518 aa).

Residues 1–13 show a composition bias toward polar residues; it reads MESTDSSPPLSMT. The tract at residues 1 to 24 is disordered; the sequence is MESTDSSPPLSMTDTEKKGDAVTT. 9 consecutive transmembrane segments (helical) span residues 99–119, 122–142, 156–176, 187–207, 221–241, 298–318, 334–354, 362–382, and 392–412; these read LALM…NIML, VGPK…TTLT, LMLG…LSMW, AIFY…AYGV, WLFL…LFCL, FMMM…SYTL, VMTT…GYIS, LCIM…WITV, and YFAI…VGAW. N-linked (GlcNAc...) asparagine glycosylation is present at N416. A run of 2 helical transmembrane segments spans residues 427–447 and 455–475; these read IGLL…NIYI and PLGF…PATI.

Belongs to the major facilitator superfamily.

Its subcellular location is the cell membrane. MFS-type transporter; part of the gene cluster that mediates the biosynthesis of communesins, a prominent class of indole alkaloids with great potential as pharmaceuticals. With the MFS transporter cnsL, is most likely responsible for cummunesins secretion and thereby may contribute to intrinsic resistance. This is MFS-type transporter cnsO from Penicillium expansum (Blue mold rot fungus).